Consider the following 214-residue polypeptide: Adenylate kinase (214 aa).

Residue 10-15 participates in ATP binding; the sequence is GAGKGT. An NMP region spans residues 30–59; that stretch reads STGDMLRAAVKAGTPLGLEAKKVMDAGQLV. AMP-binding positions include T31, R36, 57–59, 85–88, and Q92; these read QLV and GFPR. Residues 122 to 159 form an LID region; sequence GRRVHPGSGRVYHIVFNQPKVEGKDDVTGEDLAIRPDD. ATP contacts are provided by residues R123 and 132–133; that span reads VY. AMP is bound by residues R156 and R167. Q200 is a binding site for ATP.

This sequence belongs to the adenylate kinase family. As to quaternary structure, monomer.

The protein localises to the cytoplasm. It catalyses the reaction AMP + ATP = 2 ADP. Its pathway is purine metabolism; AMP biosynthesis via salvage pathway; AMP from ADP: step 1/1. Functionally, catalyzes the reversible transfer of the terminal phosphate group between ATP and AMP. Plays an important role in cellular energy homeostasis and in adenine nucleotide metabolism. The protein is Adenylate kinase of Shewanella woodyi (strain ATCC 51908 / MS32).